The primary structure comprises 250 residues: MQNLSLSQDVLPKHIAVIMDGNGRWAKAQGKPRVFGHKNGVAAVRKTISTSARLGIKAVTLFAFSSENWRRPEEEVGVLMELFMTVLSTEIKKLHKNNLRLRVIGDKSRFSERLQTKIAQAEQLTASNTGMVVNIAANYGGQWDILQATQALAEKVTQGELQPSDIDEDVFKQHLTMADLPDVDLLIRTSGECRISNFMLWQLAYAEMYFTPVFWPEFDENCLIEAVTWFVNRERRFGCTGEQVKALMEN.

The active site involves Asp20. Asp20 is a binding site for Mg(2+). Substrate-binding positions include 21–24 (GNGR), Trp25, Arg33, His37, and 65–67 (SSE). Asn68 serves as the catalytic Proton acceptor. Substrate contacts are provided by residues Trp69, Arg71, Arg188, and 194 to 196 (RIS). Glu207 serves as a coordination point for Mg(2+).

It belongs to the UPP synthase family. Homodimer. Mg(2+) serves as cofactor.

The enzyme catalyses 8 isopentenyl diphosphate + (2E,6E)-farnesyl diphosphate = di-trans,octa-cis-undecaprenyl diphosphate + 8 diphosphate. Catalyzes the sequential condensation of isopentenyl diphosphate (IPP) with (2E,6E)-farnesyl diphosphate (E,E-FPP) to yield (2Z,6Z,10Z,14Z,18Z,22Z,26Z,30Z,34E,38E)-undecaprenyl diphosphate (di-trans,octa-cis-UPP). UPP is the precursor of glycosyl carrier lipid in the biosynthesis of bacterial cell wall polysaccharide components such as peptidoglycan and lipopolysaccharide. The protein is Ditrans,polycis-undecaprenyl-diphosphate synthase ((2E,6E)-farnesyl-diphosphate specific) of Vibrio cholerae serotype O1 (strain ATCC 39315 / El Tor Inaba N16961).